The chain runs to 1106 residues: Probable LRR receptor-like serine/threonine-protein kinase At1g74360 (1106 aa).

The first 34 residues, 1–34, serve as a signal peptide directing secretion; the sequence is MTMVTRVIMTDDDSQSLCFLCFLLFFFITAIAVA. Over 35-736 the chain is Extracellular; it reads GDSLDSDREV…PRTLLLIWIS (702 aa). LRR repeat units follow at residues 86-109, 110-134, 136-156, 157-182, 184-204, 205-226, and 227-250; these read RSRV…NFSA, LTEL…LSRC, NLKH…LPGL, SNLE…LFCN, LVVA…IFNG, CRNL…WTGF, and GRLV…MFRG. N-linked (GlcNAc...) asparagine glycosylation is found at asparagine 93 and asparagine 106. Asparagine 141 carries an N-linked (GlcNAc...) asparagine glycan. Residues asparagine 188 and asparagine 193 are each glycosylated (N-linked (GlcNAc...) asparagine). Asparagine 242 and asparagine 251 each carry an N-linked (GlcNAc...) asparagine glycan. LRR repeat units lie at residues 252–275, 276–299, 300–323, 325–346, 348–371, 372–396, 398–419, 420–443, 445–468, 470–492, 566–593, 594–617, 619–640, 641–664, and 666–690; these read CTLQ…VSNC, QNLN…IGSI, SSLK…LLNL, NLVF…IFGR, TQVK…NILK, LPNL…ISQI, SLKF…EYGN, MPGL…SFGK, TSLL…IGNC, SLLW…LTRM, VRTL…ISQM, DRLS…IGQL, LAFL…IGNL, KCLQ…LNDL, and ELSK…QVAT. 2 N-linked (GlcNAc...) asparagine glycosylation sites follow: asparagine 309 and asparagine 322. 4 N-linked (GlcNAc...) asparagine glycosylation sites follow: asparagine 365, asparagine 374, asparagine 384, and asparagine 408. 2 N-linked (GlcNAc...) asparagine glycosylation sites follow: asparagine 454 and asparagine 467. N-linked (GlcNAc...) asparagine glycosylation is found at asparagine 623, asparagine 628, asparagine 652, asparagine 671, asparagine 709, and asparagine 713. Residues 737–757 traverse the membrane as a helical segment; it reads LALALAFIACLVVSGIVLMVV. The Cytoplasmic portion of the chain corresponds to 758–1106; it reads KASREAEIDL…GLSSQGYIEM (349 aa). A phosphothreonine mark is found at threonine 803 and threonine 811. The Protein kinase domain occupies 814-1095; the sequence is FSEERVVGRG…VKISGKAELF (282 aa). ATP-binding positions include 820-828 and lysine 842; that span reads VGRGGYGTV. Aspartate 941 (proton acceptor) is an active-site residue. Position 983 is a phosphotyrosine (tyrosine 983). A Phosphothreonine modification is found at threonine 991.

The protein belongs to the protein kinase superfamily. Ser/Thr protein kinase family.

The protein localises to the mitochondrion membrane. It carries out the reaction L-seryl-[protein] + ATP = O-phospho-L-seryl-[protein] + ADP + H(+). It catalyses the reaction L-threonyl-[protein] + ATP = O-phospho-L-threonyl-[protein] + ADP + H(+). This Arabidopsis thaliana (Mouse-ear cress) protein is Probable LRR receptor-like serine/threonine-protein kinase At1g74360.